A 195-amino-acid polypeptide reads, in one-letter code: Myelin-associated neurite-outgrowth inhibitor (195 aa).

Over 1 to 18 (MNPVYSPGSSGVPYANAK) the chain is Cytoplasmic. The chain crosses the membrane as a helical span at residues 19–43 (GIGYPAGFPMGYAAAAPAYSPNMYA). Over 44-143 (GPNPAFQPGY…APIPQPRGNG (100 aa)) the chain is Extracellular. The chain crosses the membrane as a helical span at residues 144–162 (VAMGMVAGTTMAMSAGTLL). Residues 163 to 195 (TSHYPTPVAPHQVTMPTYRPPGTPTYSYVPPQW) lie on the Cytoplasmic side of the membrane.

It belongs to the FAM168 family.

The protein resides in the cytoplasm. It is found in the perinuclear region. It localises to the cell membrane. Its subcellular location is the cell projection. The protein localises to the axon. In terms of biological role, inhibitor of neuronal axonal outgrowth. This is Myelin-associated neurite-outgrowth inhibitor (fam168b) from Xenopus tropicalis (Western clawed frog).